The following is a 485-amino-acid chain: Glucagon receptor (485 aa).

The N-terminal stretch at 1–26 is a signal peptide; that stretch reads MLLTQLHCPYLLLLLVVLSCLPKAPS. Over 27 to 137 the chain is Extracellular; sequence AQVMDFLFEK…EIEVQKGVAK (111 aa). 3 cysteine pairs are disulfide-bonded: C44-C68, C59-C101, and C82-C122. N-linked (GlcNAc...) asparagine glycosylation is found at N47, N60, N75, and N79. Residues 138 to 162 traverse the membrane as a helical segment; it reads MYSSYQVMYTVGYSLSLGALLLALV. At 163–174 the chain is on the cytoplasmic side; sequence ILLGLRKLHCTR. The chain crosses the membrane as a helical span at residues 175 to 199; sequence NYIHGNLFASFVLKAGSVLVIDWLL. The Extracellular portion of the chain corresponds to 200 to 226; sequence KTRYSQKIGDDLSVSVWLSDGAVAGCR. A disulfide bridge connects residues C225 and C295. The helical transmembrane segment at 227–250 threads the bilayer; the sequence is VATVIMQYGIIANYCWLLVEGVYL. Residues 251–264 are Cytoplasmic-facing; that stretch reads YSLLSITTFSEKSF. The helical transmembrane segment at 265–286 threads the bilayer; the sequence is FSLYLCIGWGSPLLFVIPWVVV. At 287 to 304 the chain is on the extracellular side; the sequence is KCLFENVQCWTSNDNMGF. A helical membrane pass occupies residues 305–327; it reads WWILRIPVLLAILINFFIFVRII. Over 328-351 the chain is Cytoplasmic; that stretch reads HLLVAKLRAHQMHYADYKFRLARS. The tract at residues 351 to 354 is important for allosteric inhibitor binding; sequence STLT. The helical transmembrane segment at 352 to 370 threads the bilayer; it reads TLTLIPLLGVHEVVFAFVT. At 371–382 the chain is on the extracellular side; it reads DEHAQGTLRSTK. Residues 383–403 form a helical membrane-spanning segment; the sequence is LFFDLFFSSFQGLLVAVLYCF. Residues 404–485 are Cytoplasmic-facing; the sequence is LNKEVQAELL…SLPRLADSPT (82 aa). Residues 455 to 485 form a disordered region; the sequence is MSAGSSSGTGCEPSAKTSLASSLPRLADSPT. Residues 456-475 are compositionally biased toward polar residues; the sequence is SAGSSSGTGCEPSAKTSLAS. Phosphoserine is present on residues S460 and S476.

This sequence belongs to the G-protein coupled receptor 2 family. Post-translationally, ligand-binding promotes phosphorylation of serine residues in the C-terminal cytoplasmic domain. Phosphorylation is important for receptor endocytosis after ligand-binding.

Its subcellular location is the cell membrane. G-protein coupled receptor for glucagon that plays a central role in the regulation of blood glucose levels and glucose homeostasis. Regulates the rate of hepatic glucose production by promoting glycogen hydrolysis and gluconeogenesis. Plays an important role in mediating the responses to fasting. Ligand binding causes a conformation change that triggers signaling via guanine nucleotide-binding proteins (G proteins) and modulates the activity of down-stream effectors, such as adenylate cyclase. Promotes activation of adenylate cyclase. Besides, plays a role in signaling via a phosphatidylinositol-calcium second messenger system. The chain is Glucagon receptor (Gcgr) from Rattus norvegicus (Rat).